We begin with the raw amino-acid sequence, 586 residues long: Guanylate-binding protein 5 (586 aa).

The segment at 1 to 306 (MALEIHMSDP…TYVNAISSGD (306 aa)) is NLRP3-binding. Residues 1–309 (MALEIHMSDP…NAISSGDLPC (309 aa)) form a GTPase domain (Globular) region. The 242-residue stretch at 35–276 (TQPVVVVAIV…FCSYIFSHSM (242 aa)) folds into the GB1/RHD3-type G domain. Residues 45–52 (GLYRTGKS), 67–69 (VAS), 181–182 (RD), and Leu245 contribute to the GTP site. The required for tetramerization, but not for dimerization stretch occupies residues 529-586 (MEIAKQNWLAEQQKMQEQQMQEQAAQLSTTFQAQNRSLLSELQHAQRTVNNDDPCVLL). Cys583 bears the Cysteine methyl ester mark. Cys583 carries the S-geranylgeranyl cysteine lipid modification. Positions 584–586 (VLL) are cleaved as a propeptide — removed in mature form.

This sequence belongs to the TRAFAC class dynamin-like GTPase superfamily. GB1/RHD3 GTPase family. GB1 subfamily. In terms of assembly, homodimer; homodimerizes upon GTP-binding, forming a close face-to-face dimer. Heterodimer with other family members, including GBP1, GBP2, GBP3 and GBP4. May also form tetramers (dimer of dimers) in the presence of GTP. Interacts with NLRP3, possibly in its tetrameric form, and promotes PYCARD/ASC polymerization. As to quaternary structure, homodimer; homodimerizes upon GTP-binding. GDP-bound form remains homodimeric. Homodimer; homodimerizes upon GTP-binding. GDP-bound is monomeric. In terms of processing, isoprenylation is required for proper subcellular location. In terms of tissue distribution, expressed in peripheral blood monocytes (at protein level).

The protein localises to the cytoplasmic vesicle membrane. It localises to the golgi apparatus membrane. The protein resides in the cytoplasm. The enzyme catalyses GTP + H2O = GDP + phosphate + H(+). Functionally, interferon (IFN)-inducible GTPase that plays important roles in innate immunity against a diverse range of bacterial, viral and protozoan pathogens. Hydrolyzes GTP, but in contrast to other family members, does not produce GMP. Following infection, recruited to the pathogen-containing vacuoles or vacuole-escaped bacteria and acts as a positive regulator of inflammasome assembly by promoting the release of inflammasome ligands from bacteria. Acts by promoting lysis of pathogen-containing vacuoles, releasing pathogens into the cytosol. Following pathogen release in the cytosol, promotes recruitment of proteins that mediate bacterial cytolysis: this liberates ligands that are detected by inflammasomes, such as lipopolysaccharide (LPS) that activates the non-canonical CASP4/CASP11 inflammasome or double-stranded DNA (dsDNA) that activates the AIM2 inflammasome. As an activator of NLRP3 inflammasome assembly: promotes selective NLRP3 inflammasome assembly in response to microbial and soluble, but not crystalline, agents. Independently of its GTPase activity, acts as an inhibitor of various viruses infectivity, such as HIV-1, Zika and influenza A viruses, by inhibiting FURIN-mediated maturation of viral envelope proteins. In terms of biological role, antigenic tumor-specific truncated splice form. The polypeptide is Guanylate-binding protein 5 (Homo sapiens (Human)).